Reading from the N-terminus, the 349-residue chain is Short chain dehydrogenase/reductase dpfgH (349 aa).

Residues 9 to 31 traverse the membrane as a helical segment; sequence LCIRVVDSLYGSFLYLPLAILFL. Residues isoleucine 65, arginine 89, and aspartate 115 each contribute to the NADP(+) site. Asparagine 118 is a glycosylation site (N-linked (GlcNAc...) asparagine). Residues asparagine 142 and lysine 164 each coordinate NADP(+). Residues serine 191 and serine 192 each act as proton donor in the active site. Positions 223 and 227 each coordinate NADP(+). Tyrosine 223 serves as the catalytic Proton acceptor. Lysine 227 (lowers pKa of active site Tyr) is an active-site residue. Asparagine 334 carries N-linked (GlcNAc...) asparagine glycosylation.

Belongs to the short-chain dehydrogenases/reductases (SDR) family.

Its subcellular location is the membrane. It functions in the pathway secondary metabolite biosynthesis; terpenoid biosynthesis. In terms of biological role, short chain dehydrogenase/reductase; part of the gene cluster that mediates the biosynthesis of diterpenoid pyrones. The first step of the pathway is the synthesis of the alpha-pyrone moiety by the polyketide synthase dpfgA via condensation of one acetyl-CoA starter unit with 3 malonyl-CoA units and 2 methylations. The alpha-pyrone is then combined with geranylgeranyl pyrophosphate (GGPP) formed by the GGPP synthase dpfgD through the action of the prenyltransferase dpfgC to yield a linear alpha-pyrone diterpenoid. Subsequent steps in the diterpenoid pyrone biosynthetic pathway involve the decalin core formation, which is initiated by the epoxidation of the C10-C11 olefin by the FAD-dependent oxidoreductase dpfgE, and is followed by a cyclization cascade catalyzed by the terpene cyclase dpfgB. The short chain dehydrogenase/reductase dpfgG then oxidizes the 8S hydroxy group to a ketone and the short chain dehydrogenase/reductase dpfgH reduces the ketone to the 8R hydroxy group to yield higginsianin B. Higginsianin B is further methylated by the methyltransferase dpfgI to produce the intermediate named FDDP B. The cytochrome P450 monooxygenase dfgpJ then catalyzes a three-step oxidation at C-27 to generate a carboxylic acid as well as C-26 hydroxylation. Finally, methyltransferase dpfgK methylates the carboxylic acid generated by dpfgJ, yielding the final diterpenoid pyrones from the pathway which were named FDDP D and FDDP E. This is Short chain dehydrogenase/reductase dpfgH from Gibberella zeae (strain ATCC MYA-4620 / CBS 123657 / FGSC 9075 / NRRL 31084 / PH-1) (Wheat head blight fungus).